Here is a 320-residue protein sequence, read N- to C-terminus: Ferrochelatase (320 aa).

Fe cation contacts are provided by H194 and E275.

Belongs to the ferrochelatase family. As to quaternary structure, monomer.

Its subcellular location is the cytoplasm. It carries out the reaction heme b + 2 H(+) = protoporphyrin IX + Fe(2+). The protein operates within porphyrin-containing compound metabolism; protoheme biosynthesis; protoheme from protoporphyrin-IX: step 1/1. In terms of biological role, catalyzes the ferrous insertion into protoporphyrin IX. The chain is Ferrochelatase from Salmonella dublin (strain CT_02021853).